The sequence spans 152 residues: Superoxide dismutase [Cu-Zn] (152 aa).

3 residues coordinate Cu cation: His-45, His-47, and His-62. Cys-56 and Cys-145 are disulfide-bonded. The Zn(2+) site is built by His-62, His-70, His-79, and Asp-82. His-119 contacts Cu cation.

The protein belongs to the Cu-Zn superoxide dismutase family. In terms of assembly, homodimer. Cu cation serves as cofactor. Zn(2+) is required as a cofactor.

It is found in the cytoplasm. It carries out the reaction 2 superoxide + 2 H(+) = H2O2 + O2. Destroys radicals which are normally produced within the cells and which are toxic to biological systems. This is Superoxide dismutase [Cu-Zn] (SODCC) from Zantedeschia aethiopica (White calla lily).